We begin with the raw amino-acid sequence, 335 residues long: Leucine-rich repeat-containing protein 39 (335 aa).

Positions 10–47 form a coiled coil; that stretch reads AVNAVKEVWEKRIKKLNEDLKREKEFQHKLVRIWEERV. LRR repeat units lie at residues 84–105, 107–128, 130–151, 153–176, 177–197, 200–221, 223–244, 246–267, and 269–290; these read QLQE…IGRF, NLIV…IGLL, RLQE…LSNC, SLEK…SNLL, KLTH…AVLN, ALEW…IERM, NLHT…ISNM, NLGT…MEEM, and NLRF…PPSE.

As to quaternary structure, interacts with MYH7 (via C-terminus). As to expression, highly expressed in skeletal muscle and heart. Not detected in other tissues tested.

The protein localises to the cytoplasm. It localises to the myofibril. It is found in the sarcomere. The protein resides in the m line. In terms of biological role, component of the sarcomeric M-band which plays a role in myocyte response to biomechanical stress. May regulate expression of other M-band proteins via an SRF-dependent pathway. Important for normal contractile function in heart. The chain is Leucine-rich repeat-containing protein 39 (LRRC39) from Homo sapiens (Human).